The following is a 278-amino-acid chain: MAVAYADKPNHFINFPLTQFQGFVLNYKGLQFQLLDEGVDCKIQTAPHISLAMLDIQPEDYRSVDVAIQEVIDDMHWGEGFQIKFENPHILGRCIVLDVKGVEELHDDLVNYIRDKGCVADQSRKWIGHCTIAQLTDAALSIKENVDFINNMQFNYKITINPSSPARLEIVKLGAERKDGFYETIASHWMGIRFEYNPPTDKLAMIMGYCCLEVVRKELEEGDLPENDDDAWFKLSYHYENNSWFFRHVYRKSSYFRKSCQNLDCNCLGFYESSVEED.

It belongs to the coronaviruses ns2a protein family.

This chain is Non-structural protein 2a, found in Bos taurus (Bovine).